The sequence spans 232 residues: 7-cyano-7-deazaguanine synthase (232 aa).

8–18 (LSGGLDSATVL) contributes to the ATP binding site. The Zn(2+) site is built by cysteine 188, cysteine 198, cysteine 201, and cysteine 204.

The protein belongs to the QueC family. Zn(2+) is required as a cofactor.

It carries out the reaction 7-carboxy-7-deazaguanine + NH4(+) + ATP = 7-cyano-7-deazaguanine + ADP + phosphate + H2O + H(+). It functions in the pathway purine metabolism; 7-cyano-7-deazaguanine biosynthesis. Its function is as follows. Catalyzes the ATP-dependent conversion of 7-carboxy-7-deazaguanine (CDG) to 7-cyano-7-deazaguanine (preQ(0)). This is 7-cyano-7-deazaguanine synthase from Nitrosospira multiformis (strain ATCC 25196 / NCIMB 11849 / C 71).